The sequence spans 258 residues: Small ribosomal subunit protein mS40 (258 aa).

Residues 1–35 constitute a mitochondrion transit peptide; the sequence is MAASVLNTLLRRLPMLSLFRGAHRVQVPLQTLCTK. Phosphoserine occurs at positions 38 and 49. The interval 218 to 258 is disordered; the sequence is RLYQGHLREESGPPPESMPKMPPTAPAEASFTGQTDPQSAL. Positions 229-242 are enriched in pro residues; the sequence is GPPPESMPKMPPTA. Positions 248–258 are enriched in polar residues; the sequence is FTGQTDPQSAL.

The protein belongs to the bacterial ribosomal protein bS18 family. Mitochondrion-specific ribosomal protein mS40 subfamily. Component of the mitochondrial ribosome small subunit (28S) which comprises a 12S rRNA and about 30 distinct proteins.

It localises to the mitochondrion. This Macaca mulatta (Rhesus macaque) protein is Small ribosomal subunit protein mS40 (MRPS18B).